Consider the following 256-residue polypeptide: DNA repair protein RecO (256 aa).

Belongs to the RecO family.

Its function is as follows. Involved in DNA repair and RecF pathway recombination. The sequence is that of DNA repair protein RecO from Rhizobium leguminosarum bv. trifolii (strain WSM2304).